A 367-amino-acid chain; its full sequence is Homoserine O-acetyltransferase (367 aa).

Residues 44–350 (NAILVTHAWT…AYGHDAFLLE (307 aa)) form the AB hydrolase-1 domain. S150 (nucleophile) is an active-site residue. R217 is a substrate binding site. Active-site residues include D311 and H344. D345 lines the substrate pocket.

This sequence belongs to the AB hydrolase superfamily. MetX family. As to quaternary structure, homodimer.

Its subcellular location is the cytoplasm. It catalyses the reaction L-homoserine + acetyl-CoA = O-acetyl-L-homoserine + CoA. It participates in amino-acid biosynthesis; L-methionine biosynthesis via de novo pathway; O-acetyl-L-homoserine from L-homoserine: step 1/1. In terms of biological role, transfers an acetyl group from acetyl-CoA to L-homoserine, forming acetyl-L-homoserine. This Citrifermentans bemidjiense (strain ATCC BAA-1014 / DSM 16622 / JCM 12645 / Bem) (Geobacter bemidjiensis) protein is Homoserine O-acetyltransferase.